The following is a 1883-amino-acid chain: DDB1- and CUL4-associated factor homolog 1 (1883 aa).

2 disordered regions span residues 1 to 47 (MDGQ…QSVE) and 309 to 340 (KPGDDNSVRDDPSRHRLNRSKSRGRGRVHEGA). Over residues 37 to 47 (NPEEGEEQSVE) the composition is skewed to acidic residues. Residues 309–322 (KPGDDNSVRDDPSR) are compositionally biased toward basic and acidic residues. A compositionally biased stretch (basic residues) spans 323–334 (HRLNRSKSRGRG). The residue at position 349 (serine 349) is a Phosphoserine. A disordered region spans residues 882 to 924 (NKPPLAQNHQPVPGQATTRPSTDVAVGTQSTGNAPQTPVAPAS). Residues 888–917 (QNHQPVPGQATTRPSTDVAVGTQSTGNAPQ) are compositionally biased toward polar residues. The LisH domain maps to 1087–1119 (DSKELLLLIHEHLQASGLGDTASALLKEAQLTP). Disordered stretches follow at residues 1157 to 1202 (TSKP…QWPS), 1214 to 1260 (PKIN…ALPQ), and 1310 to 1377 (SELR…NPER). Residues 1238–1251 (LTFSPSFSSQSRKQ) are compositionally biased toward low complexity. The span at 1310 to 1329 (SELRDSSVPGKRIDLGERRN) shows a compositional bias: basic and acidic residues. The span at 1330–1362 (STFADGSGLQTPASALDANQSGSSRLGQMTPAS) shows a compositional bias: polar residues. WD repeat units lie at residues 1464 to 1503 (DETALFTCIALLGGTNHIAVGSHAGEIKIFEASSGSMLES), 1506 to 1546 (GHQA…GGPR), 1548 to 1586 (SFDGCKAAKFSNSGLQFAALSCEASRKDVLLYDVQTCSP), 1587 to 1626 (CQKLTDTVTSSRSNPYSLVHFSPCDTLILWNGVLWDRRIP), and 1633 to 1671 (DQFTDYGGGGFHPSRNEVIINSEIWDMRTFKLLRSVPSL). Short sequence motifs (DWD box) lie at residues 1619 to 1626 (VLWDRRIP) and 1655 to 1662 (EIWDMRTF). The interval 1763–1883 (YEIGRRRPTD…DDYRDNIRSS (121 aa)) is disordered. 2 stretches are compositionally biased toward acidic residues: residues 1773–1796 (DDSDPDDDDETEDEDEDDEEEDDL) and 1808–1864 (DSGD…DGEM).

This sequence belongs to the VPRBP/DCAF1 family. In terms of assembly, component of the CUL4-RBX1-DDB1-DCAF1 E3 ubiquitin-protein ligase complex. Interacts with DDB1A through its DWD motifs. As to expression, ubiquitous but predominantly expressed in the inflorescence and roots.

The protein localises to the nucleus. The protein operates within protein modification; protein ubiquitination. Functionally, component of the CUL4-RBX1-DDB1-DCAF1 E3 ubiquitin-protein ligase complex, DCAF1 may function as the substrate recognition module within this complex. Appears to be required for plant embryogenesis and to affect several other developmental processes including leaf, shoot, and flower development. In Arabidopsis thaliana (Mouse-ear cress), this protein is DDB1- and CUL4-associated factor homolog 1 (DCAF1).